The primary structure comprises 132 residues: Agouti-signaling protein (132 aa).

An N-terminal signal peptide occupies residues 1–22 (MDVTRLLLATLLVFLCFFTAYS). A glycan (N-linked (GlcNAc...) asparagine) is linked at Asn-39. A disordered region spans residues 62 to 88 (ISRKEAEKKRSSKKEASMKKVARPRTP). The span at 63 to 79 (SRKEAEKKRSSKKEASM) shows a compositional bias: basic and acidic residues. Cystine bridges form between Cys-93–Cys-108, Cys-100–Cys-114, Cys-107–Cys-125, Cys-111–Cys-132, and Cys-116–Cys-123. One can recognise an Agouti domain in the interval 93-132 (CVATRDSCKPPAPACCDPCASCQCRFFRSACSCRVLSLNC).

The protein localises to the secreted. Its function is as follows. Involved in the regulation of melanogenesis. The binding of ASP to MC1R precludes alpha-MSH initiated signaling and thus blocks production of cAMP, leading to a down-regulation of eumelanogenesis (brown/black pigment) and thus increasing synthesis of pheomelanin (yellow/red pigment). In Macaca radiata (Bonnet macaque), this protein is Agouti-signaling protein (ASIP).